The following is a 710-amino-acid chain: MVSSVPKLHALFVSKSQPVLRAAKVTNEERSTKSKLARSLARAVNSNPWSDELESSLSSLHPSQTISRTTVLQTLRLIKVPADGLRFFDWVSNKGFSHKEQSFFLMLEFLGRARNLNVARNFLFSIERRSNGCVKLQDRYFNSLIRSYGNAGLFQESVKLFQTMKQMGISPSVLTFNSLLSILLKRGRTGMAHDLFDEMRRTYGVTPDSYTFNTLINGFCKNSMVDEAFRIFKDMELYHCNPDVVTYNTIIDGLCRAGKVKIAHNVLSGMLKKATDVHPNVVSYTTLVRGYCMKQEIDEAVLVFHDMLSRGLKPNAVTYNTLIKGLSEAHRYDEIKDILIGGNDAFTTFAPDACTFNILIKAHCDAGHLDAAMKVFQEMLNMKLHPDSASYSVLIRTLCMRNEFDRAETLFNELFEKEVLLGKDECKPLAAAYNPMFEYLCANGKTKQAEKVFRQLMKRGVQDPPSYKTLITGHCREGKFKPAYELLVLMLRREFVPDLETYELLIDGLLKIGEALLAHDTLQRMLRSSYLPVATTFHSVLAELAKRKFANESFCLVTLMLEKRIRQNIDLSTQVVRLLFSSAQKEKAFLIVRLLYDNGYLVKMEELLGYLCENRKLLDAHTLVLFCLEKSQMVDIDTCNTVIEGLCKHKRHSEAFSLYNELVELGNHQQLSCHVVLRNALEAAGKWEELQFVSKRMATLRESDDCSVLE.

A chloroplast-targeting transit peptide spans 1 to 21 (MVSSVPKLHALFVSKSQPVLR). PPR repeat units lie at residues 137-171 (QDRYFNSLIRSYGNAGLFQESVKLFQTMKQMGISP), 172-202 (SVLTFNSLLSILLKRGRTGMAHDLFDEMRRT), 208-242 (DSYTFNTLINGFCKNSMVDEAFRIFKDMELYHCNP), 243-277 (DVVTYNTIIDGLCRAGKVKIAHNVLSGMLKKATDV), 280-314 (NVVSYTTLVRGYCMKQEIDEAVLVFHDMLSRGLKP), 315-351 (NAVTYNTLIKGLSEAHRYDEIKDILIGGNDAFTTFAP), 352-386 (DACTFNILIKAHCDAGHLDAAMKVFQEMLNMKLHP), 387-421 (DSASYSVLIRTLCMRNEFDRAETLFNELFEKEVLL), 429-459 (LAAAYNPMFEYLCANGKTKQAEKVFRQLMKR), 463-497 (DPPSYKTLITGHCREGKFKPAYELLVLMLRREFVP), 498-532 (DLETYELLIDGLLKIGEALLAHDTLQRMLRSSYLP), and 533-567 (VATTFHSVLAELAKRKFANESFCLVTLMLEKRIRQ).

This sequence belongs to the PPR family. P subfamily.

It is found in the plastid. The protein resides in the chloroplast. The polypeptide is Pentatricopeptide repeat-containing protein At1g02060, chloroplastic (Arabidopsis thaliana (Mouse-ear cress)).